A 131-amino-acid polypeptide reads, in one-letter code: Profilin-3 (131 aa).

Cysteine 13 and cysteine 115 are joined by a disulfide. The short motif at 81 to 97 is the Involved in PIP2 interaction element; sequence AVIRGKKGSGGITIKKT. Threonine 111 is modified (phosphothreonine).

It belongs to the profilin family. As to quaternary structure, occurs in many kinds of cells as a complex with monomeric actin in a 1:1 ratio. Phosphorylated by MAP kinases.

The protein resides in the cytoplasm. The protein localises to the cytoskeleton. Its function is as follows. Binds to actin and affects the structure of the cytoskeleton. At high concentrations, profilin prevents the polymerization of actin, whereas it enhances it at low concentrations. This is Profilin-3 from Olea europaea (Common olive).